The sequence spans 1368 residues: DNA-directed RNA polymerase subunit beta (1368 aa).

It belongs to the RNA polymerase beta chain family. The RNAP catalytic core consists of 2 alpha, 1 beta, 1 beta' and 1 omega subunit. When a sigma factor is associated with the core the holoenzyme is formed, which can initiate transcription.

It catalyses the reaction RNA(n) + a ribonucleoside 5'-triphosphate = RNA(n+1) + diphosphate. Functionally, DNA-dependent RNA polymerase catalyzes the transcription of DNA into RNA using the four ribonucleoside triphosphates as substrates. This chain is DNA-directed RNA polymerase subunit beta, found in Cupriavidus taiwanensis (strain DSM 17343 / BCRC 17206 / CCUG 44338 / CIP 107171 / LMG 19424 / R1) (Ralstonia taiwanensis (strain LMG 19424)).